Reading from the N-terminus, the 53-residue chain is Small ribosomal subunit protein uS14 (53 aa).

4 residues coordinate Zn(2+): cysteine 17, cysteine 20, cysteine 36, and cysteine 39.

Belongs to the universal ribosomal protein uS14 family. Zinc-binding uS14 subfamily. In terms of assembly, part of the 30S ribosomal subunit. It depends on Zn(2+) as a cofactor.

In terms of biological role, binds 16S rRNA, required for the assembly of 30S particles. This Methanococcus maripaludis (strain DSM 14266 / JCM 13030 / NBRC 101832 / S2 / LL) protein is Small ribosomal subunit protein uS14.